Here is a 203-residue protein sequence, read N- to C-terminus: DNA-directed RNA polymerase III subunit rpc8 (203 aa).

It belongs to the eukaryotic RPB7/RPC8 RNA polymerase subunit family. Component of the RNA polymerase III (Pol III) complex consisting of 17 subunits. Rpc25/rpc8 and rpc17/rpc9 form a Pol III subcomplex.

It is found in the cytoplasm. The protein resides in the nucleus. In terms of biological role, DNA-dependent RNA polymerase catalyzes the transcription of DNA into RNA using the four ribonucleoside triphosphates as substrates. Specific peripheric component of RNA polymerase III which synthesizes small RNAs, such as 5S rRNA and tRNA. The chain is DNA-directed RNA polymerase III subunit rpc8 (rpc25) from Schizosaccharomyces pombe (strain 972 / ATCC 24843) (Fission yeast).